Consider the following 701-residue polypeptide: Transcriptional regulator Kaiso (701 aa).

In terms of domain architecture, BTB spans 32–94 (CDVTVIVEDR…IYSSKIVRVR (63 aa)). Disordered regions lie at residues 128-158 (GAGGKDGGTDAPSNPDHKAPEPQKSSDSPLP) and 181-311 (SSDD…QNQH). Positions 245-258 (TPSSQVQLTQNSLP) are enriched in polar residues. Residues 259-273 (TNQQSSKNTSSTTQK) are compositionally biased toward low complexity. The span at 278–311 (VNANISKNPTPAANGFLSPTAQKQGTPNAVQNQH) shows a compositional bias: polar residues. The required for methylation dependent DNA-binding stretch occupies residues 470–609 (AKLDLDGLPN…QIRQYAYVNN (140 aa)). 3 C2H2-type zinc fingers span residues 501–523 (YICIVCKRSYVCLTSLRRHFNVH), 529–551 (YPCRYCERVFPLAEYRTKHEIHH), and 557–580 (YQCLTCGSSFINYQVMASHIRSVH). The interval 519–701 (HFNVHSWEKK…EFEFVIPESY (183 aa)) is required for sequence specific DNA-binding. Residues 644–664 (DIDPDEPQQPASEGNHANSAT) are disordered. A compositionally biased stretch (polar residues) spans 652 to 664 (QPASEGNHANSAT).

Self associates. Interacts with tcf7l1-A, leading to repression of tcf7l1-A target genes. Interacts with ctnnd1, and this interaction may inhibit DNA-binding. Interacts with ncor1.

The protein resides in the nucleus. In terms of biological role, transcriptional regulator with bimodal DNA-binding specificity. Binds to methylated CpG dinucleotides in the consensus sequence 5'-CGCG-3' and also binds to the non-methylated consensus sequence 5'-CTGCNA-3'. May recruit the N-CoR repressor complex to promote histone deacetylation and the formation of repressive chromatin structures in target gene promoters. Contributes to the repression of target genes of the Wnt signaling pathway and to the methylation-dependent repression of zygotic transcription prior to the mid-blastula transition (MBT). Also required for gastrulation movements. This is Transcriptional regulator Kaiso (zbtb33) from Xenopus laevis (African clawed frog).